Consider the following 268-residue polypeptide: L-gamma-glutamyl-L-propargylglycine hydroxylase (268 aa).

The cofactor is Fe(2+).

It catalyses the reaction L-gamma-glutamyl-L-propargylglycine + 2-oxoglutarate + O2 = L-gamma-glutamyl-(3R)-L-beta-ethynylserine + succinate + CO2. It participates in amino-acid metabolism. Its pathway is antibiotic biosynthesis. In terms of biological role, involved in the biosynthesis of terminal alkyne-containing amino acids such as L-beta-ethynylserine, that are produced as antibiotics by S.cattleya. Catalyzes the hydroxylation of the dipeptide L-gamma-glutamyl-L-propargylglycine, leading to L-gamma-glutamyl-L-beta-ethynylserine. Cannot use L-propargylglycine as substrate. This chain is L-gamma-glutamyl-L-propargylglycine hydroxylase, found in Streptantibioticus cattleyicolor (strain ATCC 35852 / DSM 46488 / JCM 4925 / NBRC 14057 / NRRL 8057) (Streptomyces cattleya).